A 269-amino-acid polypeptide reads, in one-letter code: Exodeoxyribonuclease WalJ (269 aa).

Residues histidine 61, histidine 63, aspartate 65, histidine 66, and aspartate 150 each coordinate a divalent metal cation.

The protein belongs to the metallo-beta-lactamase superfamily. It depends on Fe(2+) as a cofactor. Zn(2+) serves as cofactor. Mn(2+) is required as a cofactor.

The protein resides in the cell membrane. Its function is as follows. 5'-&gt;3' double-stranded DNA exonuclease. May be involved in the WalK/WalR signal transduction pathway. Required for accurate coordination of cell division with DNA replication. May play a role in cell wall metabolism. The sequence is that of Exodeoxyribonuclease WalJ from Streptococcus pneumoniae serotype 2 (strain D39 / NCTC 7466).